We begin with the raw amino-acid sequence, 137 residues long: Probable calcium-binding protein CML33 (137 aa).

4 consecutive EF-hand domains span residues 1–36, 37–72, 76–111, and 112–137; these read MNNM…LSPS, IPSE…TAQS, DVEK…LGEK, and CTVE…FVGV. 5 residues coordinate Ca(2+): aspartate 14, serine 16, aspartate 18, lysine 20, and glutamate 25. Positions 89, 91, 93, 95, and 100 each coordinate Ca(2+).

Its function is as follows. Potential calcium sensor. The protein is Probable calcium-binding protein CML33 (CML33) of Arabidopsis thaliana (Mouse-ear cress).